The following is a 197-amino-acid chain: Cell division protein SepF (197 aa).

2 disordered regions span residues 38-72 and 164-197; these read MPTPLPEESAPAPRRLPENPTVASNFAMNSNTTPT and LSREETPATPAAPARPAAPAPAWSDEMTPMAQAQ. The segment covering 58–72 has biased composition (polar residues); sequence TVASNFAMNSNTTPT. The segment covering 170–185 has biased composition (low complexity); the sequence is PATPAAPARPAAPAPA.

It belongs to the SepF family. In terms of assembly, homodimer. Interacts with FtsZ.

It is found in the cytoplasm. Its function is as follows. Cell division protein that is part of the divisome complex and is recruited early to the Z-ring. Probably stimulates Z-ring formation, perhaps through the cross-linking of FtsZ protofilaments. Its function overlaps with FtsA. The sequence is that of Cell division protein SepF from Picosynechococcus sp. (strain ATCC 27264 / PCC 7002 / PR-6) (Agmenellum quadruplicatum).